The following is a 246-amino-acid chain: Eukaryotic translation initiation factor 3 subunit K (246 aa).

The segment covering 1–21 has biased composition (low complexity); that stretch reads MENDQDQQQQQQQSQQQQPQQ. The disordered stretch occupies residues 1-30; the sequence is MENDQDQQQQQQQSQQQQPQQEEQEQVDVD. The 164-residue stretch at 72 to 235 folds into the PCI domain; sequence YLFQANSTLL…QKKADTFTFD (164 aa).

This sequence belongs to the eIF-3 subunit K family. Component of the eukaryotic translation initiation factor 3 (eIF-3) complex.

The protein localises to the cytoplasm. Component of the eukaryotic translation initiation factor 3 (eIF-3) complex, which is involved in protein synthesis of a specialized repertoire of mRNAs and, together with other initiation factors, stimulates binding of mRNA and methionyl-tRNAi to the 40S ribosome. The eIF-3 complex specifically targets and initiates translation of a subset of mRNAs involved in cell proliferation. The chain is Eukaryotic translation initiation factor 3 subunit K (eif3K) from Dictyostelium discoideum (Social amoeba).